The chain runs to 214 residues: ATP phosphoribosyltransferase (214 aa).

Belongs to the ATP phosphoribosyltransferase family. Short subfamily. Heteromultimer composed of HisG and HisZ subunits.

The protein resides in the cytoplasm. It carries out the reaction 1-(5-phospho-beta-D-ribosyl)-ATP + diphosphate = 5-phospho-alpha-D-ribose 1-diphosphate + ATP. Its pathway is amino-acid biosynthesis; L-histidine biosynthesis; L-histidine from 5-phospho-alpha-D-ribose 1-diphosphate: step 1/9. Its function is as follows. Catalyzes the condensation of ATP and 5-phosphoribose 1-diphosphate to form N'-(5'-phosphoribosyl)-ATP (PR-ATP). Has a crucial role in the pathway because the rate of histidine biosynthesis seems to be controlled primarily by regulation of HisG enzymatic activity. The chain is ATP phosphoribosyltransferase from Marinobacter nauticus (strain ATCC 700491 / DSM 11845 / VT8) (Marinobacter aquaeolei).